Here is a 488-residue protein sequence, read N- to C-terminus: ATP synthase subunit beta (488 aa).

Residue 164–171 participates in ATP binding; sequence GGAGVGKT.

Belongs to the ATPase alpha/beta chains family. As to quaternary structure, F-type ATPases have 2 components, CF(1) - the catalytic core - and CF(0) - the membrane proton channel. CF(1) has five subunits: alpha(3), beta(3), gamma(1), delta(1), epsilon(1). CF(0) has four main subunits: a(1), b(1), b'(1) and c(9-12).

Its subcellular location is the cellular thylakoid membrane. The catalysed reaction is ATP + H2O + 4 H(+)(in) = ADP + phosphate + 5 H(+)(out). In terms of biological role, produces ATP from ADP in the presence of a proton gradient across the membrane. The catalytic sites are hosted primarily by the beta subunits. The sequence is that of ATP synthase subunit beta from Prochlorococcus marinus (strain MIT 9313).